Consider the following 238-residue polypeptide: Large ribosomal subunit protein uL5c (238 aa).

Belongs to the universal ribosomal protein uL5 family. Part of the 50S ribosomal subunit; contacts the 5S rRNA.

The protein resides in the plastid. Its subcellular location is the chloroplast. Its function is as follows. Binds 5S rRNA, forms part of the central protuberance of the 50S subunit. The chain is Large ribosomal subunit protein uL5c (rpl5) from Trieres chinensis (Marine centric diatom).